The primary structure comprises 506 residues: Lysine--tRNA ligase (506 aa).

2 residues coordinate Mg(2+): Glu415 and Glu422.

It belongs to the class-II aminoacyl-tRNA synthetase family. As to quaternary structure, homodimer. The cofactor is Mg(2+).

The protein resides in the cytoplasm. The enzyme catalyses tRNA(Lys) + L-lysine + ATP = L-lysyl-tRNA(Lys) + AMP + diphosphate. This Erwinia tasmaniensis (strain DSM 17950 / CFBP 7177 / CIP 109463 / NCPPB 4357 / Et1/99) protein is Lysine--tRNA ligase.